The following is a 133-amino-acid chain: Small ribosomal subunit protein uS8 (133 aa).

The protein belongs to the universal ribosomal protein uS8 family. In terms of assembly, part of the 30S ribosomal subunit. Contacts proteins S5 and S12.

Its function is as follows. One of the primary rRNA binding proteins, it binds directly to 16S rRNA central domain where it helps coordinate assembly of the platform of the 30S subunit. This is Small ribosomal subunit protein uS8 from Mycoplasmoides gallisepticum (strain R(low / passage 15 / clone 2)) (Mycoplasma gallisepticum).